Consider the following 86-residue polypeptide: MVKIRLTRGGAKKRPFYHIIVTDVRSARDGRNIERVGFYNPVAQGGEKRIELDLARVDHWVKNGAQPTDKVRNLIKEATKSQAAAA.

This sequence belongs to the bacterial ribosomal protein bS16 family.

This Stenotrophomonas maltophilia (strain K279a) protein is Small ribosomal subunit protein bS16.